Consider the following 315-residue polypeptide: MSEIRTQVQFVDIDEDMAGQRIDNFLRNQLKDIPKSMIYRIVRKGEVRVNKKRIKAEYKLKAGDLVRIPPVTVEKKEEDVAPSTKLNKVAELEHMIIYEDDHMLILNKPSGTAVHGGSGLKFGAIEALRALRPQARFLELVHRIDRDTSGILLVAKKRSALRHLQAQFREKTVKKFYFALVMGQWKSSCKVVNAPLLKNEVNSIVRVNPNGKPSETRFKILEKFEQATLIQASPITGRTHQIRVHTQYTGHPIAWDDRYGDRRFDAYTGQLGLDRLFLHAANIKFQHPSNDEWMEINAPMESKLEKVLVGLRKAN.

One can recognise an S4 RNA-binding domain in the interval 20–93 (QRIDNFLRNQ…TKLNKVAELE (74 aa)). D145 is an active-site residue.

This sequence belongs to the pseudouridine synthase RluA family.

It carries out the reaction uridine(955/2504/2580) in 23S rRNA = pseudouridine(955/2504/2580) in 23S rRNA. Functionally, responsible for synthesis of pseudouridine from uracil at positions 955, 2504 and 2580 in 23S ribosomal RNA. This chain is Ribosomal large subunit pseudouridine synthase C (rluC), found in Vibrio parahaemolyticus serotype O3:K6 (strain RIMD 2210633).